We begin with the raw amino-acid sequence, 411 residues long: Probable 26S proteasome regulatory subunit rpn-6.2 (411 aa).

The 170-residue stretch at Y212–G381 folds into the PCI domain.

The protein belongs to the proteasome subunit S9 family. In terms of assembly, component of the lid subcomplex of the 19S proteasome regulatory particle complex (also named PA700 complex). The 26S proteasome consists of a 20S proteasome core and two 19S regulatory subunits.

In terms of biological role, component of the lid subcomplex of the 26S proteasome, a multiprotein complex involved in the ATP-dependent degradation of ubiquitinated proteins. In the complex, rpn-6.2 is required for proteasome assembly. The polypeptide is Probable 26S proteasome regulatory subunit rpn-6.2 (Caenorhabditis briggsae).